The sequence spans 182 residues: NADH-quinone oxidoreductase subunit I (182 aa).

4Fe-4S ferredoxin-type domains lie at 52 to 82 (LTRD…LQKA) and 92 to 121 (DFFR…LTPD). Cys-62, Cys-65, Cys-68, Cys-72, Cys-101, Cys-104, Cys-107, and Cys-111 together coordinate [4Fe-4S] cluster.

Belongs to the complex I 23 kDa subunit family. NDH-1 is composed of 13 different subunits. Subunits NuoA, H, J, K, L, M, N constitute the membrane sector of the complex. [4Fe-4S] cluster serves as cofactor.

It is found in the cell inner membrane. It catalyses the reaction a quinone + NADH + 5 H(+)(in) = a quinol + NAD(+) + 4 H(+)(out). Its function is as follows. NDH-1 shuttles electrons from NADH, via FMN and iron-sulfur (Fe-S) centers, to quinones in the respiratory chain. The immediate electron acceptor for the enzyme in this species is believed to be ubiquinone. Couples the redox reaction to proton translocation (for every two electrons transferred, four hydrogen ions are translocated across the cytoplasmic membrane), and thus conserves the redox energy in a proton gradient. The sequence is that of NADH-quinone oxidoreductase subunit I from Pseudomonas fluorescens (strain ATCC BAA-477 / NRRL B-23932 / Pf-5).